The chain runs to 199 residues: Superoxide dismutase [Mn/Fe] 1 (199 aa).

Histidine 27, histidine 81, aspartate 161, and histidine 165 together coordinate Fe(3+). Mn(2+) is bound by residues histidine 27, histidine 81, aspartate 161, and histidine 165.

It belongs to the iron/manganese superoxide dismutase family. In terms of assembly, homodimer. Can also form a heterodimer with SodM. Requires Mn(2+) as cofactor. It depends on Fe(3+) as a cofactor.

The enzyme catalyses 2 superoxide + 2 H(+) = H2O2 + O2. Functionally, destroys superoxide anion radicals which are normally produced within the cells and which are toxic to biological systems. Catalyzes the dismutation of superoxide anion radicals into O2 and H2O2 by successive reduction and oxidation of the transition metal ion at the active site. This Staphylococcus aureus (strain USA300) protein is Superoxide dismutase [Mn/Fe] 1 (sodA).